Consider the following 365-residue polypeptide: Regulatory protein RapG (365 aa).

TPR repeat units follow at residues 135–168 (GKLY…KKKL), 169–202 (ASAL…TSEL), 209–242 (AQLL…DEYA), 244–284 (SAYY…EPNR), and 326–359 (RELS…EELI).

It belongs to the Rap family.

Its subcellular location is the cytoplasm. With respect to regulation, inhibited by PhrG. In terms of biological role, involved in the regulation of expression of DegU-controlled genes. Inhibits the binding of DegU to the promoter regions of aprE, coding for an extracellular alkaline protease, and comK, a master regulator for development of genetic competence. RapG does not stimulate dephosphorylation of DegU-P. The polypeptide is Regulatory protein RapG (rapG) (Bacillus subtilis (strain 168)).